Consider the following 368-residue polypeptide: UDP-N-acetylglucosamine--N-acetylmuramyl-(pentapeptide) pyrophosphoryl-undecaprenol N-acetylglucosamine transferase (368 aa).

UDP-N-acetyl-alpha-D-glucosamine is bound by residues 16-18 (TGG), asparagine 130, arginine 171, serine 197, and glutamine 296.

It belongs to the glycosyltransferase 28 family. MurG subfamily.

It localises to the cell inner membrane. It catalyses the reaction di-trans,octa-cis-undecaprenyl diphospho-N-acetyl-alpha-D-muramoyl-L-alanyl-D-glutamyl-meso-2,6-diaminopimeloyl-D-alanyl-D-alanine + UDP-N-acetyl-alpha-D-glucosamine = di-trans,octa-cis-undecaprenyl diphospho-[N-acetyl-alpha-D-glucosaminyl-(1-&gt;4)]-N-acetyl-alpha-D-muramoyl-L-alanyl-D-glutamyl-meso-2,6-diaminopimeloyl-D-alanyl-D-alanine + UDP + H(+). It functions in the pathway cell wall biogenesis; peptidoglycan biosynthesis. Functionally, cell wall formation. Catalyzes the transfer of a GlcNAc subunit on undecaprenyl-pyrophosphoryl-MurNAc-pentapeptide (lipid intermediate I) to form undecaprenyl-pyrophosphoryl-MurNAc-(pentapeptide)GlcNAc (lipid intermediate II). This is UDP-N-acetylglucosamine--N-acetylmuramyl-(pentapeptide) pyrophosphoryl-undecaprenol N-acetylglucosamine transferase from Acidiphilium cryptum (strain JF-5).